Reading from the N-terminus, the 120-residue chain is MDYEFLRDVTGRVLVRMSMGHEVVGHWFNEEVKDNLSLLDEVEQAARTVKGSERSWQRAGHEYTIWIDGEEVMIRANQLDFSGDEMEEGMSYYDEESLSLCGMEDFLRVVAAYREFVSKA.

Belongs to the UPF0231 family.

This Salmonella paratyphi A (strain ATCC 9150 / SARB42) protein is UPF0231 protein YacL.